The chain runs to 266 residues: Type III pantothenate kinase (266 aa).

Position 6–13 (Asp-6–Val-13) interacts with ATP. Gly-112–Arg-115 contributes to the substrate binding site. Asp-114 functions as the Proton acceptor in the catalytic mechanism. A K(+)-binding site is contributed by Asp-134. An ATP-binding site is contributed by Thr-137. Residue Thr-190 participates in substrate binding.

Belongs to the type III pantothenate kinase family. Homodimer. It depends on NH4(+) as a cofactor. Requires K(+) as cofactor.

The protein resides in the cytoplasm. The catalysed reaction is (R)-pantothenate + ATP = (R)-4'-phosphopantothenate + ADP + H(+). The protein operates within cofactor biosynthesis; coenzyme A biosynthesis; CoA from (R)-pantothenate: step 1/5. Catalyzes the phosphorylation of pantothenate (Pan), the first step in CoA biosynthesis. The protein is Type III pantothenate kinase of Desulfotalea psychrophila (strain LSv54 / DSM 12343).